The sequence spans 132 residues: Small ribosomal subunit protein uS8 (132 aa).

It belongs to the universal ribosomal protein uS8 family. As to quaternary structure, part of the 30S ribosomal subunit. Contacts proteins S5 and S12.

One of the primary rRNA binding proteins, it binds directly to 16S rRNA central domain where it helps coordinate assembly of the platform of the 30S subunit. The protein is Small ribosomal subunit protein uS8 of Clostridium perfringens (strain ATCC 13124 / DSM 756 / JCM 1290 / NCIMB 6125 / NCTC 8237 / Type A).